The chain runs to 479 residues: Ribosomal RNA small subunit methyltransferase F (479 aa).

S-adenosyl-L-methionine-binding positions include 128-134, E152, D179, and D197; that span reads ASAPGSK. Residue C250 is the Nucleophile of the active site.

It belongs to the class I-like SAM-binding methyltransferase superfamily. RsmB/NOP family.

The protein resides in the cytoplasm. The enzyme catalyses cytidine(1407) in 16S rRNA + S-adenosyl-L-methionine = 5-methylcytidine(1407) in 16S rRNA + S-adenosyl-L-homocysteine + H(+). Specifically methylates the cytosine at position 1407 (m5C1407) of 16S rRNA. The polypeptide is Ribosomal RNA small subunit methyltransferase F (Shewanella halifaxensis (strain HAW-EB4)).